The following is a 231-amino-acid chain: MSNTPIELKGSSFTLSVVHLHEAEPKVIHQALEDKIAQAPAFLKHAPVVLNVSALEAPVNWSAMHKAVSATGLRVIGVSGCKDAQLKAEIEKMGLPILTEGKEKAPRPAPAPQAPAQNTTPVTKTRLIDTPVRSGQRIYAPQCDLIVTSHVSAGAELIADGNIHVYGMMRGRALAGASGDRETQIFCTNLMAELVSIAGEYWLSDQIPAEFYGKAARLQLVENALTVQPLN.

Residues 102 to 125 (KEKAPRPAPAPQAPAQNTTPVTKT) are disordered.

It belongs to the MinC family. As to quaternary structure, interacts with MinD and FtsZ.

Cell division inhibitor that blocks the formation of polar Z ring septums. Rapidly oscillates between the poles of the cell to destabilize FtsZ filaments that have formed before they mature into polar Z rings. Prevents FtsZ polymerization. The protein is Probable septum site-determining protein MinC of Escherichia coli O6:K15:H31 (strain 536 / UPEC).